A 149-amino-acid polypeptide reads, in one-letter code: Ribonuclease pancreatic (149 aa).

A signal peptide spans 1 to 25 (MGLEKSLILFPLFFLLLGWVQPSLG). Residues Lys32 and Arg35 each coordinate substrate. The Proton acceptor role is filled by His37. 4 cysteine pairs are disulfide-bonded: Cys51–Cys109, Cys65–Cys120, Cys83–Cys135, and Cys90–Cys97. Substrate contacts are provided by residues 66-70 (KPVNT) and Lys91. His144 serves as the catalytic Proton donor.

The protein belongs to the pancreatic ribonuclease family. Monomer. Interacts with and forms tight 1:1 complexes with RNH1. Dimerization of two such complexes may occur. Interaction with RNH1 inhibits this protein. As to expression, pancreas.

It localises to the secreted. It carries out the reaction an [RNA] containing cytidine + H2O = an [RNA]-3'-cytidine-3'-phosphate + a 5'-hydroxy-ribonucleotide-3'-[RNA].. It catalyses the reaction an [RNA] containing uridine + H2O = an [RNA]-3'-uridine-3'-phosphate + a 5'-hydroxy-ribonucleotide-3'-[RNA].. In terms of biological role, endonuclease that catalyzes the cleavage of RNA on the 3' side of pyrimidine nucleotides. Acts on single-stranded and double-stranded RNA. This chain is Ribonuclease pancreatic (Rnase1), found in Mus musculus (Mouse).